Here is a 42-residue protein sequence, read N- to C-terminus: uncharacterized protein (42 aa).

It is found in the cytoplasm. This is an uncharacterized protein from Escherichia coli (strain K12).